Consider the following 205-residue polypeptide: Urease accessory protein UreE (205 aa).

Residues 171 to 205 form a disordered region; it reads AHEAHPHAHSHAGGHGHVHSGHGHGGKHGEHDAES. The span at 177–196 shows a compositional bias: basic residues; it reads HAHSHAGGHGHVHSGHGHGG.

The protein belongs to the UreE family.

It is found in the cytoplasm. In terms of biological role, involved in urease metallocenter assembly. Binds nickel. Probably functions as a nickel donor during metallocenter assembly. The polypeptide is Urease accessory protein UreE (Bordetella bronchiseptica (strain ATCC BAA-588 / NCTC 13252 / RB50) (Alcaligenes bronchisepticus)).